The following is a 259-amino-acid chain: Trypsin (259 aa).

The N-terminal stretch at methionine 1–alanine 32 is a signal peptide. Positions alanine 33–proline 36 are cleaved as a propeptide — activation peptide. Residues valine 37–arginine 257 form the Peptidase S1 domain. Cysteine 58 and cysteine 74 are joined by a disulfide. Residues histidine 73 and aspartate 118 each act as charge relay system in the active site. Cystine bridges form between cysteine 177-cysteine 192 and cysteine 204-cysteine 233. The active-site Charge relay system is serine 208.

It belongs to the peptidase S1 family.

The catalysed reaction is Preferential cleavage: Arg-|-Xaa, Lys-|-Xaa.. In Streptomyces griseus, this protein is Trypsin (sprT).